We begin with the raw amino-acid sequence, 32 residues long: Protamine S4 (32 aa).

Residues 1-32 form a disordered region; that stretch reads GCKKRKARKRPKCKKARKRPKCKRRKVAKKKC.

As to expression, testis.

Its subcellular location is the nucleus. It localises to the chromosome. Protamines substitute for histones in the chromatin of sperm during the haploid phase of spermatogenesis. They compact sperm DNA into a highly condensed, stable and inactive complex. The protein is Protamine S4 of Scyliorhinus canicula (Small-spotted catshark).